Consider the following 306-residue polypeptide: tRNA dimethylallyltransferase (306 aa).

ATP is bound at residue 14–21 (GPTAAGKS). Residue 16–21 (TAAGKS) participates in substrate binding. The interval 39-42 (DSRL) is interaction with substrate tRNA.

This sequence belongs to the IPP transferase family. Monomer. It depends on Mg(2+) as a cofactor.

The enzyme catalyses adenosine(37) in tRNA + dimethylallyl diphosphate = N(6)-dimethylallyladenosine(37) in tRNA + diphosphate. Functionally, catalyzes the transfer of a dimethylallyl group onto the adenine at position 37 in tRNAs that read codons beginning with uridine, leading to the formation of N6-(dimethylallyl)adenosine (i(6)A). This chain is tRNA dimethylallyltransferase, found in Synechococcus elongatus (strain ATCC 33912 / PCC 7942 / FACHB-805) (Anacystis nidulans R2).